The sequence spans 656 residues: UvrABC system protein B (656 aa).

In terms of domain architecture, Helicase ATP-binding spans 24–409 (QGVRNRTPSQ…QGHIVEQILR (386 aa)). 37-44 (GTTGSGKT) contributes to the ATP binding site. The short motif at 90–113 (YYDYYQPEAYIARNDTYIEKSLLI) is the Beta-hairpin element. Residues 426-589 (QVDDLLEEIR…ITPKPIIKAI (164 aa)) form the Helicase C-terminal domain. The UVR domain maps to 616–651 (EKLIKKYENLMLQAANAFRFDEAAQYRDKMKAAKEQ).

It belongs to the UvrB family. In terms of assembly, forms a heterotetramer with UvrA during the search for lesions. Interacts with UvrC in an incision complex.

It is found in the cytoplasm. The UvrABC repair system catalyzes the recognition and processing of DNA lesions. A damage recognition complex composed of 2 UvrA and 2 UvrB subunits scans DNA for abnormalities. Upon binding of the UvrA(2)B(2) complex to a putative damaged site, the DNA wraps around one UvrB monomer. DNA wrap is dependent on ATP binding by UvrB and probably causes local melting of the DNA helix, facilitating insertion of UvrB beta-hairpin between the DNA strands. Then UvrB probes one DNA strand for the presence of a lesion. If a lesion is found the UvrA subunits dissociate and the UvrB-DNA preincision complex is formed. This complex is subsequently bound by UvrC and the second UvrB is released. If no lesion is found, the DNA wraps around the other UvrB subunit that will check the other stand for damage. The chain is UvrABC system protein B from Chlamydia abortus (strain DSM 27085 / S26/3) (Chlamydophila abortus).